We begin with the raw amino-acid sequence, 428 residues long: Histidine--tRNA ligase (428 aa).

It belongs to the class-II aminoacyl-tRNA synthetase family. Homodimer.

Its subcellular location is the cytoplasm. The catalysed reaction is tRNA(His) + L-histidine + ATP = L-histidyl-tRNA(His) + AMP + diphosphate + H(+). This Mesomycoplasma hyopneumoniae (strain J / ATCC 25934 / NCTC 10110) (Mycoplasma hyopneumoniae) protein is Histidine--tRNA ligase.